Reading from the N-terminus, the 350-residue chain is 3-isopropylmalate dehydrogenase (350 aa).

76–87 lines the NAD(+) pocket; that stretch reads GPKWDNAPKRPE. The substrate site is built by arginine 94, arginine 104, arginine 132, and aspartate 217. Mg(2+) is bound by residues aspartate 217, aspartate 241, and aspartate 245. 275-287 serves as a coordination point for NAD(+); it reads GSAPDIANQNIAN.

The protein belongs to the isocitrate and isopropylmalate dehydrogenases family. LeuB type 1 subfamily. Homodimer. The cofactor is Mg(2+). Mn(2+) serves as cofactor.

The protein localises to the cytoplasm. The enzyme catalyses (2R,3S)-3-isopropylmalate + NAD(+) = 4-methyl-2-oxopentanoate + CO2 + NADH. It participates in amino-acid biosynthesis; L-leucine biosynthesis; L-leucine from 3-methyl-2-oxobutanoate: step 3/4. Functionally, catalyzes the oxidation of 3-carboxy-2-hydroxy-4-methylpentanoate (3-isopropylmalate) to 3-carboxy-4-methyl-2-oxopentanoate. The product decarboxylates to 4-methyl-2 oxopentanoate. The sequence is that of 3-isopropylmalate dehydrogenase from Listeria innocua serovar 6a (strain ATCC BAA-680 / CLIP 11262).